A 548-amino-acid chain; its full sequence is Glucose-6-phosphate isomerase (548 aa).

Glutamate 355 functions as the Proton donor in the catalytic mechanism. Residues histidine 386 and lysine 514 contribute to the active site.

Belongs to the GPI family.

It is found in the cytoplasm. The catalysed reaction is alpha-D-glucose 6-phosphate = beta-D-fructose 6-phosphate. It functions in the pathway carbohydrate biosynthesis; gluconeogenesis. It participates in carbohydrate degradation; glycolysis; D-glyceraldehyde 3-phosphate and glycerone phosphate from D-glucose: step 2/4. Its function is as follows. Catalyzes the reversible isomerization of glucose-6-phosphate to fructose-6-phosphate. This Yersinia pestis (strain Pestoides F) protein is Glucose-6-phosphate isomerase.